The primary structure comprises 87 residues: Costars family protein (87 aa).

It belongs to the costars family.

This chain is Costars family protein, found in Oryza sativa subsp. indica (Rice).